Reading from the N-terminus, the 641-residue chain is Phosphomethylpyrimidine synthase (641 aa).

A compositionally biased stretch (polar residues) spans 1–12 (MTDTSTQNTATP). The interval 1-25 (MTDTSTQNTATPTDEYGAEIHPKHS) is disordered. Residues N200, M229, Y258, H294, 314–316 (SRG), 355–358 (DGLR), and E394 contribute to the substrate site. H398 is a Zn(2+) binding site. Residue Y421 participates in substrate binding. H462 contributes to the Zn(2+) binding site. Positions 542, 545, and 550 each coordinate [4Fe-4S] cluster.

It belongs to the ThiC family. [4Fe-4S] cluster serves as cofactor.

The enzyme catalyses 5-amino-1-(5-phospho-beta-D-ribosyl)imidazole + S-adenosyl-L-methionine = 4-amino-2-methyl-5-(phosphooxymethyl)pyrimidine + CO + 5'-deoxyadenosine + formate + L-methionine + 3 H(+). It participates in cofactor biosynthesis; thiamine diphosphate biosynthesis. Its function is as follows. Catalyzes the synthesis of the hydroxymethylpyrimidine phosphate (HMP-P) moiety of thiamine from aminoimidazole ribotide (AIR) in a radical S-adenosyl-L-methionine (SAM)-dependent reaction. The chain is Phosphomethylpyrimidine synthase from Corynebacterium jeikeium (strain K411).